The following is a 496-amino-acid chain: Probable cytosol aminopeptidase (496 aa).

2 residues coordinate Mn(2+): Lys-251 and Asp-256. Residue Lys-263 is part of the active site. Residues Asp-274, Asp-333, and Glu-335 each coordinate Mn(2+). Residue Arg-337 is part of the active site.

This sequence belongs to the peptidase M17 family. Requires Mn(2+) as cofactor.

The protein resides in the cytoplasm. The catalysed reaction is Release of an N-terminal amino acid, Xaa-|-Yaa-, in which Xaa is preferably Leu, but may be other amino acids including Pro although not Arg or Lys, and Yaa may be Pro. Amino acid amides and methyl esters are also readily hydrolyzed, but rates on arylamides are exceedingly low.. It catalyses the reaction Release of an N-terminal amino acid, preferentially leucine, but not glutamic or aspartic acids.. Its function is as follows. Presumably involved in the processing and regular turnover of intracellular proteins. Catalyzes the removal of unsubstituted N-terminal amino acids from various peptides. This is Probable cytosol aminopeptidase from Acidovorax ebreus (strain TPSY) (Diaphorobacter sp. (strain TPSY)).